Consider the following 171-residue polypeptide: Small ribosomal subunit protein uS5 (171 aa).

Residues 15–78 form the S5 DRBM domain; sequence LEEKVVKINR…EKAKKQLVRI (64 aa).

This sequence belongs to the universal ribosomal protein uS5 family. In terms of assembly, part of the 30S ribosomal subunit. Contacts proteins S4 and S8.

Functionally, with S4 and S12 plays an important role in translational accuracy. In terms of biological role, located at the back of the 30S subunit body where it stabilizes the conformation of the head with respect to the body. The chain is Small ribosomal subunit protein uS5 from Onion yellows phytoplasma (strain OY-M).